Reading from the N-terminus, the 709-residue chain is Twinkle homolog protein, chloroplastic/mitochondrial (709 aa).

A chloroplast and mitochondrion-targeting transit peptide spans 1–16 (MRFLLRLPQIHFRKLS). The region spanning 280–385 (SEVIIVEGEI…KKSEDEHFKD (106 aa)) is the Toprim domain. The Mg(2+) site is built by Glu-286, Asp-348, and Asp-350. An SF4 helicase domain is found at 430-698 (THGHEYGVST…GSYSDSPVTP (269 aa)). 460-467 (GIPNSGKS) contributes to the ATP binding site.

Requires Mg(2+) as cofactor. As to expression, expressed in young leaves and shoot apex tissues. Detected in developing tissues such as cotyledons, sepals, pistils and inflorescences. Nearly undetectable in mature leaves.

Its subcellular location is the plastid. It is found in the chloroplast. The protein resides in the mitochondrion. It carries out the reaction ATP + H2O = ADP + phosphate + H(+). Its function is as follows. Has both DNA primase and DNA helicase activities and may be involved in organelle DNA replication. Capable of producing RNA primers of 9 to 18 bases from a single-stranded DNA template. This Arabidopsis thaliana (Mouse-ear cress) protein is Twinkle homolog protein, chloroplastic/mitochondrial.